The sequence spans 63 residues: Large ribosomal subunit protein uL29 (63 aa).

The protein belongs to the universal ribosomal protein uL29 family.

This Listeria innocua serovar 6a (strain ATCC BAA-680 / CLIP 11262) protein is Large ribosomal subunit protein uL29.